Here is a 113-residue protein sequence, read N- to C-terminus: Protein AaeX (113 aa).

2 consecutive transmembrane segments (helical) span residues 3-23 and 43-63; these read LLPV…EMIL and FVWH…YLIS.

Belongs to the AaeX family.

The protein resides in the cell membrane. The sequence is that of Protein AaeX from Sodalis glossinidius (strain morsitans).